Here is a 1180-residue protein sequence, read N- to C-terminus: DNA-directed RNA polymerase subunit beta' (1180 aa).

Zn(2+) contacts are provided by C60, C62, C75, and C78. Residues D449, D451, and D453 each contribute to the Mg(2+) site. Positions 792, 872, 879, and 882 each coordinate Zn(2+).

It belongs to the RNA polymerase beta' chain family. As to quaternary structure, the RNAP catalytic core consists of 2 alpha, 1 beta, 1 beta' and 1 omega subunit. When a sigma factor is associated with the core the holoenzyme is formed, which can initiate transcription. Mg(2+) serves as cofactor. Zn(2+) is required as a cofactor.

It carries out the reaction RNA(n) + a ribonucleoside 5'-triphosphate = RNA(n+1) + diphosphate. DNA-dependent RNA polymerase catalyzes the transcription of DNA into RNA using the four ribonucleoside triphosphates as substrates. The chain is DNA-directed RNA polymerase subunit beta' from Heliobacterium modesticaldum (strain ATCC 51547 / Ice1).